The chain runs to 288 residues: MVLILDGKEVAKEVRASLVPRVAKFKETYGRAPQLSVVIVGDDKASHVYVKNKKIACEKIGMTSTIHTLPAETTQSELNQILSKLNNDNGVDGILVQFPLPKHLSSDEVLKLVSAEKDADGLTYESLGYFFAGKPLVSPCTPAGVMEILKHYRIPVEGKKAVVVGRSNIVGKPMALLLTEANATVTLCHSKTSNMSELTKQADLVVVAAGKARLLGKEDFKKDAIVIDVGMHGSGQGGKLCGDVRFEELDGWAKAATPVPGGVGPMTIAMLLKNTCQLAEQRARDPQF.

NADP(+) is bound by residues 165 to 167 and Ser-190; that span reads GRS.

This sequence belongs to the tetrahydrofolate dehydrogenase/cyclohydrolase family. As to quaternary structure, homodimer.

It carries out the reaction (6R)-5,10-methylene-5,6,7,8-tetrahydrofolate + NADP(+) = (6R)-5,10-methenyltetrahydrofolate + NADPH. It catalyses the reaction (6R)-5,10-methenyltetrahydrofolate + H2O = (6R)-10-formyltetrahydrofolate + H(+). It participates in one-carbon metabolism; tetrahydrofolate interconversion. Functionally, catalyzes the oxidation of 5,10-methylenetetrahydrofolate to 5,10-methenyltetrahydrofolate and then the hydrolysis of 5,10-methenyltetrahydrofolate to 10-formyltetrahydrofolate. The sequence is that of Bifunctional protein FolD from Bdellovibrio bacteriovorus (strain ATCC 15356 / DSM 50701 / NCIMB 9529 / HD100).